The following is a 493-amino-acid chain: Guanosine-5'-triphosphate,3'-diphosphate pyrophosphatase (493 aa).

Belongs to the GppA/Ppx family. GppA subfamily.

It carries out the reaction guanosine 3'-diphosphate 5'-triphosphate + H2O = guanosine 3',5'-bis(diphosphate) + phosphate + H(+). It functions in the pathway purine metabolism; ppGpp biosynthesis; ppGpp from GTP: step 2/2. Functionally, catalyzes the conversion of pppGpp to ppGpp. Guanosine pentaphosphate (pppGpp) is a cytoplasmic signaling molecule which together with ppGpp controls the 'stringent response', an adaptive process that allows bacteria to respond to amino acid starvation, resulting in the coordinated regulation of numerous cellular activities. The sequence is that of Guanosine-5'-triphosphate,3'-diphosphate pyrophosphatase from Salmonella paratyphi B (strain ATCC BAA-1250 / SPB7).